We begin with the raw amino-acid sequence, 247 residues long: Cationic trypsin-3 (247 aa).

Positions 1 to 15 (MKALIFLAFLGAAVA) are cleaved as a signal peptide. Positions 16–24 (LPLDDDDDK) are cleaved as a propeptide — activation peptide. Residues 25–245 (IVGGYTCQKN…YVNWIQQTVA (221 aa)) form the Peptidase S1 domain. Disulfide bonds link C31–C161, C49–C65, C133–C234, C140–C207, C172–C186, and C197–C221. Residue H64 is the Charge relay system of the active site. The Ca(2+) site is built by E76, N78, V81, and E86. D108 serves as the catalytic Charge relay system. The active-site Charge relay system is the S201.

This sequence belongs to the peptidase S1 family. Requires Ca(2+) as cofactor.

The protein resides in the secreted. It localises to the extracellular space. It carries out the reaction Preferential cleavage: Arg-|-Xaa, Lys-|-Xaa.. The chain is Cationic trypsin-3 (Try3) from Rattus norvegicus (Rat).